The following is a 379-amino-acid chain: Probable purine permease 11 (379 aa).

10 helical membrane passes run 43 to 63, 76 to 96, 114 to 134, 144 to 164, 167 to 187, 203 to 223, 239 to 259, 294 to 313, 314 to 330, and 334 to 354; these read WVLV…SVLL, WMAT…LLLL, IVLI…LYSV, YSLI…FINA, FTAL…LIAL, IVGF…LSLM, VLEM…IGLF, VCSV…FSNV, ISTL…LVVF, and MSGV…SYVY.

The protein belongs to the purine permeases (TC 2.A.7.14) family. In terms of assembly, may form a complex with the potassium channel subunit KAT1.

It is found in the membrane. The chain is Probable purine permease 11 (PUP11) from Arabidopsis thaliana (Mouse-ear cress).